The chain runs to 586 residues: ATPase family AAA domain-containing protein 3A (586 aa).

2 disordered regions span residues 1–55 (MSWL…PTGL) and 111–134 (QAEE…QYQD). Position 2 is an N-acetylserine (Ser2). Residues 2 to 50 (SWLFGINKGPKGEGAGPPPPLPPAQPGAEGGGDRGLGDRPAPKDKWSNF) form a required for interaction with the inner surface of the mitochondrial outer membrane region. Topologically, residues 2 to 246 (SWLFGINKGP…FRAFVTDWDK (245 aa)) are mitochondrial intermembrane. The span at 17-26 (GPPPPLPPAQ) shows a compositional bias: pro residues. Composition is skewed to basic and acidic residues over residues 32 to 48 (GGDR…DKWS) and 111 to 125 (QAEE…ETRQ). A coiled-coil region spans residues 86 to 219 (QLEQQSKLKE…QIRLKAAEHR (134 aa)). The chain crosses the membrane as a helical span at residues 247-264 (VTATVAGLTLLAVGVYSA). Over 265 to 586 (KNATLVAGRF…PGRGDEPSPS (322 aa)) the chain is Mitochondrial matrix. The S100B-binding stretch occupies residues 290-305 (RITVLEALRHPIQVSR). Ser321 bears the Phosphoserine mark. 352–359 (GPPGTGKT) contacts ATP. Position 491 is an N6-acetyllysine (Lys491).

This sequence belongs to the AAA ATPase family. Can form homooligomers. Homodimer formation at the N-terminus may be regulated by ATP and is required for the interaction with the inner surface of the mitochondrial outer membrane and correct mitochondrial homeostasis. Interacts with components of the mitochondrial ribosome and with other proteins involved in mitochondrial RNA metabolism. May also interact with protein involved in lipid metabolism, including STARD9. May interact with FAM210A. Interacts with GADD45GIP1. Interacts with S100B in a Ca(+2)- and Zn(+2)-dependent manner; this interaction probably occurs in the cytosol prior to mitochondrial targeting. S100B could assist ATAD3A cytoplasmic processing, preventing aggregation and favoring mitochondrial localization. Interacts with HSP60/HSPD1. Forms heterooligomers with ATAD3B; this interaction may affect ATAD3A activity. Interacts with CLPB. Interacts with EIF2AK3/PERK; ATAD3A and EIF2S1/eIF-2-alpha occupy a common binding site within the cytoplasmic loop of EIF2AK3/PERK, leading to prevent EIF2AK3/PERK association with its substrate EIF2S1/eIF-2-alpha. In terms of tissue distribution, overexpressed in lung adenocarcinomas (at protein level).

The protein resides in the mitochondrion inner membrane. Its subcellular location is the mitochondrion matrix. The protein localises to the mitochondrion nucleoid. It carries out the reaction ATP + H2O = ADP + phosphate + H(+). Essential for mitochondrial network organization, mitochondrial metabolism and cell growth at organism and cellular level. May play an important role in mitochondrial protein synthesis. May also participate in mitochondrial DNA replication. May bind to mitochondrial DNA D-loops and contribute to nucleoid stability. Required for enhanced channeling of cholesterol for hormone-dependent steroidogenesis. Involved in mitochondrial-mediated antiviral innate immunity. Required to protect mitochondria from the PERK-mediated unfolded protein response: specifically inhibits the activity of EIF2AK3/PERK at mitochondria-endoplasmic reticulum contact sites, thereby providing a safe haven for mitochondrial protein translation during endoplasmic reticulum stress. Ability to inhibit EIF2AK3/PERK is independent of its ATPase activity. Also involved in the mitochondrial DNA damage response by promoting signaling between damaged genomes and the mitochondrial membrane, leading to activation of the integrated stress response (ISR). In Homo sapiens (Human), this protein is ATPase family AAA domain-containing protein 3A.